A 418-amino-acid chain; its full sequence is UDP-N-acetylglucosamine 1-carboxyvinyltransferase (418 aa).

22-23 (KN) is a binding site for phosphoenolpyruvate. Position 91 (R91) interacts with UDP-N-acetyl-alpha-D-glucosamine. The active-site Proton donor is the C115. C115 carries the post-translational modification 2-(S-cysteinyl)pyruvic acid O-phosphothioketal. UDP-N-acetyl-alpha-D-glucosamine is bound by residues D303 and I325.

It belongs to the EPSP synthase family. MurA subfamily.

The protein resides in the cytoplasm. It catalyses the reaction phosphoenolpyruvate + UDP-N-acetyl-alpha-D-glucosamine = UDP-N-acetyl-3-O-(1-carboxyvinyl)-alpha-D-glucosamine + phosphate. The protein operates within cell wall biogenesis; peptidoglycan biosynthesis. Its function is as follows. Cell wall formation. Adds enolpyruvyl to UDP-N-acetylglucosamine. The protein is UDP-N-acetylglucosamine 1-carboxyvinyltransferase of Syntrophobacter fumaroxidans (strain DSM 10017 / MPOB).